The following is a 444-amino-acid chain: Transmembrane protein with metallophosphoesterase domain (444 aa).

5 helical membrane-spanning segments follow: residues 7–27, 43–63, 87–107, 114–134, and 162–182; these read LSLG…MIVS, LFRL…SIYI, MVVA…IFLV, FSLV…FLCV, and LALR…VGLL. Residues Asp-214, His-216, Asp-246, Asn-277, His-382, and His-384 each coordinate a divalent metal cation.

This sequence belongs to the metallophosphoesterase superfamily. LOC643853 family. It depends on a divalent metal cation as a cofactor.

The protein resides in the membrane. The protein is Transmembrane protein with metallophosphoesterase domain (TMPPE) of Bos taurus (Bovine).